The chain runs to 169 residues: AGMGTSIHLAAALLAAQAGVDLLHVPYKGSTPAAADLIAGRLSMMVDSITAQQSFIKSGRVRALGVTSLQPAPSLPGIPPLAQAADQPNFEVLTWFGLFVPSRTSPDIVKVLNTAMNEALKTPEVQKALADIGASAQGGTSQALGVLWDNEIDRWGQLIVHHRLNTNEL.

This sequence belongs to the UPF0065 (bug) family.

The protein resides in the periplasm. In Pseudomonas knackmussii (strain DSM 6978 / CCUG 54928 / LMG 23759 / B13), this protein is UPF0065 protein in clcB-clcD intergenic region.